A 208-amino-acid chain; its full sequence is Large ribosomal subunit protein uL3 (208 aa).

The segment at 123-146 (RHGQSRGPMAHGSRYHRRPGSMGP) is disordered.

It belongs to the universal ribosomal protein uL3 family. In terms of assembly, part of the 50S ribosomal subunit. Forms a cluster with proteins L14 and L19.

One of the primary rRNA binding proteins, it binds directly near the 3'-end of the 23S rRNA, where it nucleates assembly of the 50S subunit. This Streptococcus thermophilus (strain CNRZ 1066) protein is Large ribosomal subunit protein uL3.